The primary structure comprises 505 residues: Glutamate--tRNA ligase (505 aa).

A 'HIGH' region motif is present at residues 12–22 (PSPTGDPHVGT). Residues 253 to 257 (KLSKR) carry the 'KMSKS' region motif. Lys256 contributes to the ATP binding site.

The protein belongs to the class-I aminoacyl-tRNA synthetase family. Glutamate--tRNA ligase type 1 subfamily. In terms of assembly, monomer.

The protein localises to the cytoplasm. It catalyses the reaction tRNA(Glu) + L-glutamate + ATP = L-glutamyl-tRNA(Glu) + AMP + diphosphate. In terms of biological role, catalyzes the attachment of glutamate to tRNA(Glu) in a two-step reaction: glutamate is first activated by ATP to form Glu-AMP and then transferred to the acceptor end of tRNA(Glu). The polypeptide is Glutamate--tRNA ligase (Chlamydia felis (strain Fe/C-56) (Chlamydophila felis)).